The chain runs to 466 residues: Replication termination factor 1 (466 aa).

2 DNA-binding domain regions span residues 94–249 (RDYT…LRRK) and 250–421 (YNPF…KKTL). HTH myb-type domains follow at residues 251 to 304 (NPFK…QPGE) and 305 to 363 (INRS…SRDI). 2 consecutive DNA-binding regions (H-T-H motif) follow at residues 278-300 (WSLI…RDYI) and 336-359 (WSLI…YTLI).

Its subcellular location is the nucleus. Its function is as follows. Mediates site-specific replication termination at the polar replication barrier RTS1, a barrier which ensures that replication of the mat1 locus in S.pombe occurs in the centromere-proximal direction. The polypeptide is Replication termination factor 1 (rtf1) (Schizosaccharomyces pombe (strain 972 / ATCC 24843) (Fission yeast)).